Here is a 145-residue protein sequence, read N- to C-terminus: 3-hydroxyacyl-[acyl-carrier-protein] dehydratase FabZ (145 aa).

His51 is an active-site residue.

The protein belongs to the thioester dehydratase family. FabZ subfamily.

The protein localises to the cytoplasm. It carries out the reaction a (3R)-hydroxyacyl-[ACP] = a (2E)-enoyl-[ACP] + H2O. Involved in unsaturated fatty acids biosynthesis. Catalyzes the dehydration of short chain beta-hydroxyacyl-ACPs and long chain saturated and unsaturated beta-hydroxyacyl-ACPs. This chain is 3-hydroxyacyl-[acyl-carrier-protein] dehydratase FabZ, found in Staphylococcus carnosus (strain TM300).